The primary structure comprises 304 residues: D-alanine--D-alanine ligase (304 aa).

An ATP-grasp domain is found at 99 to 293 (KKILRYEGIE…YSKLLDMIIE (195 aa)). Position 126-181 (126-181 (LDKLGFPLVVKPNSGGSSVGVKIVYDKDELISMLETVFEWDSEVVIEKYIKGEEIT)) interacts with ATP. Mg(2+) is bound by residues Asp-248, Glu-260, and Asn-262.

This sequence belongs to the D-alanine--D-alanine ligase family. Requires Mg(2+) as cofactor. Mn(2+) serves as cofactor.

It localises to the cytoplasm. The catalysed reaction is 2 D-alanine + ATP = D-alanyl-D-alanine + ADP + phosphate + H(+). Its pathway is cell wall biogenesis; peptidoglycan biosynthesis. Cell wall formation. This Bacillus anthracis (strain A0248) protein is D-alanine--D-alanine ligase.